Consider the following 257-residue polypeptide: 6-phosphogluconolactonase (257 aa).

Alanine 2 is modified (N-acetylalanine). Residue serine 49 is modified to Phosphoserine. Lysine 180 is subject to N6-acetyllysine.

Belongs to the glucosamine/galactosamine-6-phosphate isomerase family. 6-phosphogluconolactonase subfamily.

It localises to the cytoplasm. The catalysed reaction is 6-phospho-D-glucono-1,5-lactone + H2O = 6-phospho-D-gluconate + H(+). It functions in the pathway carbohydrate degradation; pentose phosphate pathway; D-ribulose 5-phosphate from D-glucose 6-phosphate (oxidative stage): step 2/3. Functionally, hydrolysis of 6-phosphogluconolactone to 6-phosphogluconate. This chain is 6-phosphogluconolactonase, found in Rattus norvegicus (Rat).